We begin with the raw amino-acid sequence, 402 residues long: MFSSHSLSYKLSSLSTEASASSGNNTLSTIQEFSGFHNVISSVCTHTETHKPKKKRGLPGNPDPDAEVIALSPKTLLATNRFVCEICNKGFQRDQNLQLHRRGHNLPWKLKQKNTKEQQKKKVYVCPETNCAHHHPSRALGDLTGIKKHFCRKHGEKKWKCEKCSKFYAVQSDWKAHTKICGTRDYRCDCGTLFSRKDTFITHRAFCDALAEESARLHSTSSSNLTNPNPNFQGHHFMFNKSSSLLFTSSPLFIEPSLSTAALSTPPTAALSATALLQKATSLSSTTFGGGGQTRSIGHHRHLTNVNEFLGVDRVMMTSASSSEYDQLVVDGFTSTWQKADRLTRDFLGLTGHGGHVSVRPGDMLEYAGGVAFPMSAYDTESHDHSFQKAYDHLGFSGAHRM.

A disordered region spans residues 47-66 (TETHKPKKKRGLPGNPDPDA). At serine 72 the chain carries Phosphoserine. 2 consecutive C2H2-type zinc fingers follow at residues 82–104 (FVCE…RRGH) and 124–154 (YVCP…CRKH). The Nuclear localization signal motif lies at 146 to 153 (IKKHFCRK). The C2H2-type 2; degenerate zinc finger occupies 159 to 183 (WKCEKCSKFYAVQSDWKAHTKICGT). Residues cysteine 161, cysteine 164, histidine 177, cysteine 181, cysteine 188, cysteine 190, histidine 203, and cysteine 207 each contribute to the Zn(2+) site. The CCHC-type 2; atypical zinc finger occupies 186-209 (YRCDCGTLFSRKDTFITHRAFCDA). The tract at residues 196-208 (RKDTFITHRAFCD) is SHR-binding.

It is found in the nucleus. Probable transcription factor. This is Protein indeterminate-domain 12 from Arabidopsis thaliana (Mouse-ear cress).